A 420-amino-acid polypeptide reads, in one-letter code: Acyl-coenzyme A amino acid N-acyltransferase 2 (420 aa).

Active-site charge relay system residues include Ser-235, Asp-329, and His-363. The Microbody targeting signal signature appears at 418-420 (SKL).

The protein belongs to the C/M/P thioester hydrolase family.

It is found in the peroxisome. Its function is as follows. Acyltransferase which efficiently conjugates very long-chain and long-chain fatty acids to taurine. Shows no conjugation activity in the presence of glycine. This chain is Acyl-coenzyme A amino acid N-acyltransferase 2, found in Mus musculus (Mouse).